The following is a 658-amino-acid chain: Protein cueball (658 aa).

Topologically, residues 1-543 (MSGVTARMEN…SYCKNSFNRT (543 aa)) are extracellular. Residues Asn-25 and Asn-122 are each glycosylated (N-linked (GlcNAc...) asparagine). 3 LDL-receptor class B repeats span residues 100–142 (RKLY…NHDL), 152–195 (RHLY…DHYS), and 196–241 (NRIY…NSRY). 3 EGF-like domains span residues 352 to 384 (EIPI…FEGE), 387 to 422 (DRSK…KRCE), and 458 to 495 (EEYT…KRCE). 8 cysteine pairs are disulfide-bonded: Cys-356/Cys-365, Cys-360/Cys-375, Cys-391/Cys-401, Cys-395/Cys-410, Cys-412/Cys-421, Cys-462/Cys-472, Cys-466/Cys-483, and Cys-485/Cys-494. Residues Asn-400 and Asn-415 are each glycosylated (N-linked (GlcNAc...) asparagine). Asn-476 carries N-linked (GlcNAc...) asparagine glycosylation. Asn-541 carries N-linked (GlcNAc...) asparagine glycosylation. The helical transmembrane segment at 544–564 (VVYASLAFAASLFILMVILLI) threads the bilayer. Topologically, residues 565–658 (VRRFYEEGRP…SCAGGDKNLP (94 aa)) are cytoplasmic.

This sequence belongs to the cueball family.

It localises to the cell membrane. Functionally, has a role in spermatogenesis and oogenesis. This is Protein cueball from Culex quinquefasciatus (Southern house mosquito).